Consider the following 184-residue polypeptide: Protein Syd (184 aa).

The protein belongs to the Syd family.

Its subcellular location is the cell inner membrane. Functionally, interacts with the SecY protein in vivo. May bind preferentially to an uncomplexed state of SecY, thus functioning either as a chelating agent for excess SecY in the cell or as a regulatory factor that negatively controls the translocase function. In Photorhabdus laumondii subsp. laumondii (strain DSM 15139 / CIP 105565 / TT01) (Photorhabdus luminescens subsp. laumondii), this protein is Protein Syd.